The chain runs to 757 residues: Protein aardvark (757 aa).

3 disordered regions span residues 39–63, 122–166, and 256–285; these read SSIN…DSNN, LEEN…SSIL, and SSNG…IESS. Residues 121–205 are a coiled coil; sequence ILEENNNNNN…FNQFNFLEGI (85 aa). 2 stretches are compositionally biased toward low complexity: residues 125 to 164 and 256 to 270; these read NNNN…SSSS and SSNG…NNNN. The F-box domain maps to 310-356; it reads QFDIFLIPTEMLVHLLSFLSANDLWRISLTCKRIWYIVDVFKFWELL. ARM repeat units lie at residues 454-498, 506-548, 549-591, 592-634, 635-678, and 679-723; these read GGIS…SNDN, GGIQ…VAIE, GGIQ…SAKE, GGIG…ISRQ, NGIQ…IARE, and GGIN…RSGG.

The protein belongs to the beta-catenin family.

The protein localises to the cytoplasm. It is found in the cell junction. Required to regulate pattern formation during multi-cellular stages of development and for the formation of adherens junctions. Plays a structural role during the regulation of stalk formation. Involved in cell signaling. Required for spore-cell differentiation. Overexpression increases number and size of cell junctions and reduces spore-cell formation. In Dictyostelium discoideum (Social amoeba), this protein is Protein aardvark (aarA).